The chain runs to 2288 residues: Protein Ycf2 (2288 aa).

1629–1636 (GSIGTGRS) is an ATP binding site.

This sequence belongs to the Ycf2 family.

It localises to the plastid. The protein resides in the chloroplast stroma. In terms of biological role, probable ATPase of unknown function. Its presence in a non-photosynthetic plant (Epifagus virginiana) and experiments in tobacco indicate that it has an essential function which is probably not related to photosynthesis. The protein is Protein Ycf2 of Phaseolus vulgaris (Kidney bean).